The following is a 441-amino-acid chain: Hydroxycinnamoyl-CoA:5-hydroxyanthranilate N-hydroxycinnamoyltransferase HHT1 (441 aa).

Catalysis depends on proton acceptor residues His-158 and Asp-388.

The protein belongs to the plant acyltransferase family.

It catalyses the reaction 5-hydroxyanthranilate + (E)-4-coumaroyl-CoA = avenanthramide A + CoA. It carries out the reaction 5-hydroxyanthranilate + (E)-caffeoyl-CoA = avenanthramide C + CoA. In terms of biological role, involved in the biosynthesis of avenanthramide phytoalexins, which are phenolic alkaloids found mainly in oats. Catalyzes the N-acylation of 5-hydroxyanthranilate with 4-coumaroyl-CoA or caffeoyl-CoA as acyl donors, forming avenanthramide A and avenanthramide C, respectively. Does not accept feruloyl-CoA as a substrate. This chain is Hydroxycinnamoyl-CoA:5-hydroxyanthranilate N-hydroxycinnamoyltransferase HHT1, found in Avena sativa (Oat).